The primary structure comprises 600 residues: UvrABC system protein C (600 aa).

The GIY-YIG domain maps to 15–100; that stretch reads NSAGVYQYFN…IKQLHPKYNI (86 aa). The UVR domain occupies 203 to 238; it reads SILIKNLEKQMLVLAQNENYEEAAKVRDQIVTIKDL.

The protein belongs to the UvrC family. In terms of assembly, interacts with UvrB in an incision complex.

It localises to the cytoplasm. In terms of biological role, the UvrABC repair system catalyzes the recognition and processing of DNA lesions. UvrC both incises the 5' and 3' sides of the lesion. The N-terminal half is responsible for the 3' incision and the C-terminal half is responsible for the 5' incision. The polypeptide is UvrABC system protein C (Campylobacter jejuni subsp. jejuni serotype O:6 (strain 81116 / NCTC 11828)).